We begin with the raw amino-acid sequence, 202 residues long: Eukaryotic translation initiation factor isoform 4E (202 aa).

Residues 1–24 (MATEAPPPVDTTEVPPFTAAETAV) form a disordered region. MRNA contacts are provided by residues 46-51 (QGAAWG), Lys78, and 96-97 (WE). Cys101 and Cys140 are oxidised to a cystine. MRNA contacts are provided by residues 147 to 152 (RRSQDK) and 191 to 194 (KRER).

This sequence belongs to the eukaryotic initiation factor 4E family. EIF4F is a multi-subunit complex, the composition of which varies with external and internal environmental conditions. It is composed of at least EIF4A, EIF4E and EIF4G. EIF4E is also known to interact with other partners. In higher plants two isoforms of EIF4F have been identified, named isoform EIF4F and isoform EIF(iso)4F. Isoform EIF4F has subunits p220 and p26, whereas isoform EIF(iso)4F has subunits p82 and p28. In terms of assembly, (Microbial infection) Interacts with viral genome-linked protein (VPg); this interaction is possible in susceptible hosts but impaired in resistant plants. In terms of processing, according to the redox status, the Cys-101-Cys-140 disulfide bridge may have a role in regulating protein function by affecting its ability to bind capped mRNA.

The protein localises to the cytoplasm. It localises to the nucleus. In terms of biological role, component of the protein complex eIF4F, which is involved in the recognition of the mRNA cap, ATP-dependent unwinding of 5'-terminal secondary structure and recruitment of mRNA to the ribosome. Recognizes and binds the 7-methylguanosine-containing mRNA cap during an early step in the initiation of protein synthesis and facilitates ribosome binding by inducing the unwinding of the mRNAs secondary structures. Key component of recessive resistance to potyviruses. Functionally, (Microbial infection) Susceptibility host factor required for viral infection by recruiting viral RNAs to the host ribosomal complex via an interaction with viral genome-linked protein (VPg). The sequence is that of Eukaryotic translation initiation factor isoform 4E from Capsicum annuum (Capsicum pepper).